Here is an 89-residue protein sequence, read N- to C-terminus: MAKKSKIAKAKKQMAMIEKYADKRQELKAAGDRTALAKLPRDSNPNRLRLRDQTDGRPRGYMRKFGMSRIKFRELAHQGLIPGVKKASW.

Residues 29–62 (AAGDRTALAKLPRDSNPNRLRLRDQTDGRPRGYM) are disordered. A compositionally biased stretch (basic and acidic residues) spans 49–58 (RLRDQTDGRP).

It belongs to the universal ribosomal protein uS14 family. In terms of assembly, part of the 30S ribosomal subunit. Contacts proteins S3 and S10.

Functionally, binds 16S rRNA, required for the assembly of 30S particles and may also be responsible for determining the conformation of the 16S rRNA at the A site. This is Small ribosomal subunit protein uS14A from Enterococcus faecalis (strain ATCC 700802 / V583).